The chain runs to 816 residues: Lon protease (816 aa).

A Lon N-terminal domain is found at 27–221 (LPLLPIRDVV…KVNDLLAREH (195 aa)). 372–379 (GPPGVGKT) contributes to the ATP binding site. The region spanning 608–789 (KNEVGVVNGL…DEVLKLALEK (182 aa)) is the Lon proteolytic domain. Active-site residues include S695 and K738. Positions 795-816 (PKGKAKPATPKVVVRPSKEISA) are disordered. Low complexity predominate over residues 800 to 809 (KPATPKVVVR).

This sequence belongs to the peptidase S16 family. In terms of assembly, homohexamer. Organized in a ring with a central cavity.

Its subcellular location is the cytoplasm. It carries out the reaction Hydrolysis of proteins in presence of ATP.. Its function is as follows. ATP-dependent serine protease that mediates the selective degradation of mutant and abnormal proteins as well as certain short-lived regulatory proteins. Required for cellular homeostasis and for survival from DNA damage and developmental changes induced by stress. Degrades polypeptides processively to yield small peptide fragments that are 5 to 10 amino acids long. Binds to DNA in a double-stranded, site-specific manner. The chain is Lon protease from Trichlorobacter lovleyi (strain ATCC BAA-1151 / DSM 17278 / SZ) (Geobacter lovleyi).